A 662-amino-acid chain; its full sequence is DCC-interacting protein 13-beta (662 aa).

Residues Ala3–Val268 form the BAR domain. The PH domain occupies Leu277–Arg375. In terms of domain architecture, PID spans Ser486 to Asp635. The segment at Asp643 to Ala662 is disordered. The span at Ser653–Ala662 shows a compositional bias: basic and acidic residues.

Homodimer. Homotetramer. Binds RAB5A/Rab5 through an N-terminal domain. This interaction is essential for its recruitment to endosomal membranes as well as its role in cell proliferation. Binds subunits of the NuRD/MeCP1 complex. Interacts with FSHR; interaction is independent of follicle stimulating hormone stimulation. Interacts with APPL1; the interaction is decreased by adiponectin in a time-dependent manner. Forms a complex comprising APPL1, RUVBL2, CTNNB1, HDAC1 and HDAC2; interaction reduces interaction between CTNNB1, HDAC1, HDAC2 and RUVBL2 leading to the decrease of deacetylase activity of this complex; affects the recruitment of repressive complexes to the Wnt target genes. Interacts (via BAR domain) with TBC1D1; interaction is dependent of TBC1D1 phosphorylation at 'Ser-235'; interaction diminishes the phosphorylation of TBC1D1 at 'Thr-596', resulting in inhibition of SLC2A4 translocation and glucose uptake. Interacts with ANXA2; targets APPL2 to endosomes and acting in parallel to RAB5A. Interacts with RAB31 (in GTP-bound form); interaction contributes to or enhances recruitment of APPL2 to the phagosomes; interaction enhances Fc-gamma receptor-mediated phagocytosis through PI3K/Akt signaling in macrophages. Interacts with PIK3R1; forms a complex with PIK3R1 and APPL1. Interacts (via BAR domain) with ADIPOR1; hinders the accessibility of APPL1 to ADIPOR1; negatively regulates adiponectin signaling; ADIPOQ dissociates this interaction and facilitates the recruitment of APPL1 to ADIPOR1. Interacts (via BAR domain) with ADIPOR2; ADIPOQ dissociates this interaction.

The protein resides in the early endosome membrane. The protein localises to the nucleus. It localises to the cell membrane. It is found in the endosome membrane. Its subcellular location is the cytoplasm. The protein resides in the cytoplasmic vesicle. The protein localises to the phagosome. It localises to the cell projection. It is found in the ruffle. Its subcellular location is the ruffle membrane. The protein resides in the phagosome membrane. In terms of biological role, multifunctional adapter protein that binds to various membrane receptors, nuclear factors and signaling proteins to regulate many processes, such as cell proliferation, immune response, endosomal trafficking and cell metabolism. Regulates signaling pathway leading to cell proliferation through interaction with RAB5A and subunits of the NuRD/MeCP1 complex. Plays a role in immune response by modulating phagocytosis, inflammatory and innate immune responses. In macrophages, enhances Fc-gamma receptor-mediated phagocytosis through interaction with RAB31 leading to activation of PI3K/Akt signaling. In response to LPS, modulates inflammatory responses by playing a key role on the regulation of TLR4 signaling and in the nuclear translocation of RELA/NF-kappa-B p65 and the secretion of pro- and anti-inflammatory cytokines. Also functions as a negative regulator of innate immune response via inhibition of AKT1 signaling pathway by forming a complex with APPL1 and PIK3R1. Plays a role in endosomal trafficking of TGFBR1 from the endosomes to the nucleus. Plays a role in cell metabolism by regulating adiponecting ans insulin signaling pathways and adaptative thermogenesis. In muscle, negatively regulates adiponectin-simulated glucose uptake and fatty acid oyidation by inhibiting adiponectin signaling pathway through APPL1 sequestration thereby antagonizing APPL1 action. In muscles, negatively regulates insulin-induced plasma membrane recruitment of GLUT4 and glucose uptake through interaction with TBC1D1. Plays a role in cold and diet-induced adaptive thermogenesis by activating ventromedial hypothalamus (VMH) neurons throught AMPK inhibition which enhances sympathetic outflow to subcutaneous white adipose tissue (sWAT), sWAT beiging and cold tolerance. Also plays a role in other signaling pathways namely Wnt/beta-catenin, HGF and glucocorticoid receptor signaling. Positive regulator of beta-catenin/TCF-dependent transcription through direct interaction with RUVBL2/reptin resulting in the relief of RUVBL2-mediated repression of beta-catenin/TCF target genes by modulating the interactions within the beta-catenin-reptin-HDAC complex. May affect adult neurogenesis in hippocampus and olfactory system via regulating the sensitivity of glucocorticoid receptor. Required for fibroblast migration through HGF cell signaling. The polypeptide is DCC-interacting protein 13-beta (Rattus norvegicus (Rat)).